The following is a 900-amino-acid chain: Phosphoenolpyruvate carboxylase (900 aa).

Active-site residues include His140 and Lys568.

Belongs to the PEPCase type 1 family. Requires Mg(2+) as cofactor.

The catalysed reaction is oxaloacetate + phosphate = phosphoenolpyruvate + hydrogencarbonate. Forms oxaloacetate, a four-carbon dicarboxylic acid source for the tricarboxylic acid cycle. This Neisseria gonorrhoeae (strain ATCC 700825 / FA 1090) protein is Phosphoenolpyruvate carboxylase.